Reading from the N-terminus, the 360-residue chain is Cyclin-dependent kinase 10 (360 aa).

Residues 39-323 form the Protein kinase domain; it reads FEKLNRIGEG…SGDCLESSYF (285 aa). Residues 45 to 53 and Lys-68 each bind ATP; that span reads IGEGTYGIV. Asp-163 functions as the Proton acceptor in the catalytic mechanism. Thr-196 bears the Phosphothreonine mark. The segment at 334–360 is disordered; it reads LMPTFPHHRNKRAAPAAAEGQSKRCRP.

This sequence belongs to the protein kinase superfamily. CMGC Ser/Thr protein kinase family. CDC2/CDKX subfamily. In terms of assembly, heterodimer with CCNQ, the interaction is required for kinase activity. Interacts with ETS2. Interacts with PRK2.

Its subcellular location is the cytoplasm. The protein resides in the cytoskeleton. It is found in the cilium basal body. It carries out the reaction L-seryl-[protein] + ATP = O-phospho-L-seryl-[protein] + ADP + H(+). The catalysed reaction is L-threonyl-[protein] + ATP = O-phospho-L-threonyl-[protein] + ADP + H(+). Its function is as follows. Cyclin-dependent kinase that phosphorylates the transcription factor ETS2 (in vitro) and positively controls its proteasomal degradation (in cells). Involved in the regulation of actin cytoskeleton organization through the phosphorylation of actin dynamics regulators such as PKN2. Is a negative regulator of ciliogenesis through phosphorylation of PKN2 and promotion of RhoA signaling. This Mus musculus (Mouse) protein is Cyclin-dependent kinase 10 (Cdk10).